We begin with the raw amino-acid sequence, 104 residues long: Ig lambda-3 chain C region (104 aa).

The region spanning 6–99 (PTLTMFPPSP…EGDTVEKSLS (94 aa)) is the Ig-like domain. Cys-27 and Cys-85 are disulfide-bonded.

The polypeptide is Ig lambda-3 chain C region (Iglc3) (Mus musculus (Mouse)).